The chain runs to 615 residues: Protein PSK SIMULATOR 2 (615 aa).

Residue Gly2 is the site of N-myristoyl glycine attachment. Over residues 16 to 27 (KKLRSNDDDKSR) the composition is skewed to basic and acidic residues. 2 disordered regions span residues 16 to 59 (KKLR…KSSK) and 506 to 529 (AHGV…SNTQ). Over residues 42–52 (SDSYYSDNYGG) the composition is skewed to low complexity. Over residues 512-529 (QETNHVSPPNNRTISNTQ) the composition is skewed to polar residues.

The protein localises to the nucleus. In terms of biological role, promotes seedling growth probably via the regulation of phytosulfokine (PSK) signaling; PSK are peptide phytohormones acting as growth factors. Involved in PSK-induced root growth. Together with PSI1 and PSI3, required during vegetative growth and reproduction. The chain is Protein PSK SIMULATOR 2 from Arabidopsis thaliana (Mouse-ear cress).